The following is a 261-amino-acid chain: Carnitinyl-CoA dehydratase (261 aa).

The Nucleophile role is filled by E111. E131 serves as the catalytic Proton acceptor.

The protein belongs to the enoyl-CoA hydratase/isomerase family.

The catalysed reaction is (R)-carnitinyl-CoA = crotonobetainyl-CoA + H2O. Its pathway is amine and polyamine metabolism; carnitine metabolism. Functionally, catalyzes the reversible dehydration of L-carnitinyl-CoA to crotonobetainyl-CoA. The chain is Carnitinyl-CoA dehydratase from Escherichia coli (strain ATCC 8739 / DSM 1576 / NBRC 3972 / NCIMB 8545 / WDCM 00012 / Crooks).